A 518-amino-acid polypeptide reads, in one-letter code: Tropomyosin-1, isoforms 33/34 (518 aa).

The stretch at 14-267 (DKDGALERAL…DDLIVEKERY (254 aa)) forms a coiled coil. Disordered regions lie at residues 101–125 (RSEE…ESER) and 288–518 (FWNP…APPA). A compositionally biased stretch (pro residues) spans 293 to 305 (NPKPPTPKLPTPT). Over residues 318–348 (AAEAAAAAEAEAAEAAAAAGEAGPDGAPAAP) the composition is skewed to low complexity. Composition is skewed to pro residues over residues 357 to 374 (EPTP…PPPF) and 394 to 405 (EPPPPGSEPEPV). The segment covering 406–518 (PAAEGEAAPA…AAAEGEAPPA (113 aa)) has biased composition (low complexity).

The protein belongs to the tropomyosin family. In terms of assembly, homodimer. Both isoforms are only expressed in indirect flight muscles.

It localises to the cytoplasm. Its subcellular location is the cytoskeleton. Functionally, tropomyosin, in association with the troponin complex, plays a central role in the calcium dependent regulation of muscle contraction. This is Tropomyosin-1, isoforms 33/34 (Tm1) from Drosophila melanogaster (Fruit fly).